Consider the following 324-residue polypeptide: Acetyl-coenzyme A carboxylase carboxyl transferase subunit alpha (324 aa).

In terms of domain architecture, CoA carboxyltransferase C-terminal spans Arg44–Ile298.

It belongs to the AccA family. Acetyl-CoA carboxylase is a heterohexamer composed of biotin carboxyl carrier protein (accB), biotin carboxylase (accC) and two subunits each of ACCase subunit alpha (accA) and ACCase subunit beta (accD).

It is found in the plastid. The protein resides in the chloroplast. The catalysed reaction is N(6)-carboxybiotinyl-L-lysyl-[protein] + acetyl-CoA = N(6)-biotinyl-L-lysyl-[protein] + malonyl-CoA. It participates in lipid metabolism; malonyl-CoA biosynthesis; malonyl-CoA from acetyl-CoA: step 1/1. Functionally, component of the acetyl coenzyme A carboxylase (ACC) complex. First, biotin carboxylase catalyzes the carboxylation of biotin on its carrier protein (BCCP) and then the CO(2) group is transferred by the carboxyltransferase to acetyl-CoA to form malonyl-CoA. The polypeptide is Acetyl-coenzyme A carboxylase carboxyl transferase subunit alpha (Porphyra purpurea (Red seaweed)).